The following is a 208-amino-acid chain: MKVLVTGFEPFGGEKINPTERIAKDLDGIKIGDAQVFGRVLPVVFGKAKEVLEKTLEEIKPDIAIHVGLAPGRSAISIERIAVNAIDARIPDNEGKKIEDEPIVPGAPTAYFSTLPIKKIMKKLHERGIPAYISNSAGLYLCNYVMYLSLHHSATKGYPKMSGFIHVPYIPEQIIDKIGKGQVPPSMCYEMELEAVKVAIEVALEELL.

Residues glutamate 79, cysteine 142, and histidine 166 contribute to the active site.

Belongs to the peptidase C15 family. In terms of assembly, homotetramer made of two disulfide-linked dimers.

The protein localises to the cytoplasm. It carries out the reaction Release of an N-terminal pyroglutamyl group from a polypeptide, the second amino acid generally not being Pro.. Functionally, removes 5-oxoproline from various penultimate amino acid residues except L-proline. This chain is Pyrrolidone-carboxylate peptidase (pcp), found in Pyrococcus furiosus (strain ATCC 43587 / DSM 3638 / JCM 8422 / Vc1).